We begin with the raw amino-acid sequence, 76 residues long: Peptide ARACIN 1 (76 aa).

The signal sequence occupies residues 1-22 (MAMKTSHVLLLCLMFVIGFVEA). A propeptide spans 23–35 (RRSDTGPDISTPP) (removed in mature form). The SxS motif essential for MIK2 binding signature appears at 36 to 38 (SGS). Residues 36 to 49 (SGSCGASIAEFNSS) carry the SCOOP motif motif. Residues 56–76 (APPCRRPRLQNSEDVTHTTLP) are disordered. Residues 64–76 (LQNSEDVTHTTLP) show a composition bias toward polar residues.

Belongs to the serine rich endogenous peptide (SCOOP) phytocytokine family. In terms of assembly, interacts with MIK2 (via extracellular leucine-rich repeat domain); this interaction triggers the formation of complex between MIK2 and the BAK1/SERK3 and SERK4 coreceptors, and subsequent BAK1 activation by phosphorylation. Mainly expressed in young developing leaves, hydathodes, immature flowers and elongating pollen tubes.

It localises to the cell membrane. Its subcellular location is the secreted. The protein localises to the extracellular space. It is found in the apoplast. The protein resides in the endoplasmic reticulum. In terms of biological role, brassicaceae-specific phytocytokine (plant endogenous peptide released into the apoplast) perceived by MIK2 in a BAK1/SERK3 and SERK4 coreceptors-dependent manner, that modulates various physiological and antimicrobial processes including growth prevention and reactive oxygen species (ROS) response regulation. Inhibits the fungal growth of Alternaria brassicicola, Sclerotinia sclerotiorum, Fusarium graminearum, yeast (Saccharomyces) and Botrytis cinerea, thus being an antimicrobial peptide (AMP). Promotes resistance to A.brassicicola and B.cinerea. In Arabidopsis thaliana (Mouse-ear cress), this protein is Peptide ARACIN 1.